A 407-amino-acid polypeptide reads, in one-letter code: 1-deoxy-D-xylulose 5-phosphate reductoisomerase (407 aa).

Positions 25, 26, 27, 28, 53, and 136 each coordinate NADPH. Position 137 (K137) interacts with 1-deoxy-D-xylulose 5-phosphate. E138 is a binding site for NADPH. D162 is a binding site for Mn(2+). Positions 163, 164, 188, and 211 each coordinate 1-deoxy-D-xylulose 5-phosphate. E164 contributes to the Mn(2+) binding site. G217 serves as a coordination point for NADPH. 1-deoxy-D-xylulose 5-phosphate-binding residues include S224, N229, K230, and E233. Position 233 (E233) interacts with Mn(2+).

It belongs to the DXR family. Requires Mg(2+) as cofactor. The cofactor is Mn(2+).

It catalyses the reaction 2-C-methyl-D-erythritol 4-phosphate + NADP(+) = 1-deoxy-D-xylulose 5-phosphate + NADPH + H(+). It functions in the pathway isoprenoid biosynthesis; isopentenyl diphosphate biosynthesis via DXP pathway; isopentenyl diphosphate from 1-deoxy-D-xylulose 5-phosphate: step 1/6. In terms of biological role, catalyzes the NADPH-dependent rearrangement and reduction of 1-deoxy-D-xylulose-5-phosphate (DXP) to 2-C-methyl-D-erythritol 4-phosphate (MEP). In Rhodopseudomonas palustris (strain HaA2), this protein is 1-deoxy-D-xylulose 5-phosphate reductoisomerase.